Consider the following 236-residue polypeptide: Eukaryotic translation initiation factor 3 subunit J (236 aa).

The segment at 20 to 88 (ANNINKWEGE…AEEEKRLANL (69 aa)) is disordered. Positions 28–46 (GEDDDEDVKESWEDEEEKK) are enriched in acidic residues. 2 stretches are compositionally biased toward basic and acidic residues: residues 47-58 (DEEKPTKTEVPV) and 68-88 (AKLEEEERLREAEEEKRLANL).

This sequence belongs to the eIF-3 subunit J family. Component of the eukaryotic translation initiation factor 3 (eIF-3) complex. The eIF-3 complex interacts with pix.

The protein resides in the cytoplasm. Its function is as follows. Component of the eukaryotic translation initiation factor 3 (eIF-3) complex, which is involved in protein synthesis of a specialized repertoire of mRNAs and, together with other initiation factors, stimulates binding of mRNA and methionyl-tRNAi to the 40S ribosome. The eIF-3 complex specifically targets and initiates translation of a subset of mRNAs involved in cell proliferation. This Drosophila willistoni (Fruit fly) protein is Eukaryotic translation initiation factor 3 subunit J.